The chain runs to 341 residues: S-adenosylmethionine:tRNA ribosyltransferase-isomerase (341 aa).

It belongs to the QueA family. In terms of assembly, monomer.

The protein resides in the cytoplasm. It carries out the reaction 7-aminomethyl-7-carbaguanosine(34) in tRNA + S-adenosyl-L-methionine = epoxyqueuosine(34) in tRNA + adenine + L-methionine + 2 H(+). The protein operates within tRNA modification; tRNA-queuosine biosynthesis. Its function is as follows. Transfers and isomerizes the ribose moiety from AdoMet to the 7-aminomethyl group of 7-deazaguanine (preQ1-tRNA) to give epoxyqueuosine (oQ-tRNA). This chain is S-adenosylmethionine:tRNA ribosyltransferase-isomerase, found in Clostridium botulinum (strain ATCC 19397 / Type A).